Here is a 1380-residue protein sequence, read N- to C-terminus: DNA-directed RNA polymerase subunit beta (1380 aa).

The protein belongs to the RNA polymerase beta chain family. In terms of assembly, the RNAP catalytic core consists of 2 alpha, 1 beta, 1 beta' and 1 omega subunit. When a sigma factor is associated with the core the holoenzyme is formed, which can initiate transcription.

It carries out the reaction RNA(n) + a ribonucleoside 5'-triphosphate = RNA(n+1) + diphosphate. Its function is as follows. DNA-dependent RNA polymerase catalyzes the transcription of DNA into RNA using the four ribonucleoside triphosphates as substrates. The protein is DNA-directed RNA polymerase subunit beta of Rhizobium meliloti (strain 1021) (Ensifer meliloti).